The following is a 389-amino-acid chain: S-adenosylmethionine synthase (389 aa).

His15 serves as a coordination point for ATP. Asp17 contributes to the Mg(2+) binding site. Position 43 (Glu43) interacts with K(+). L-methionine-binding residues include Glu56 and Gln99. The tract at residues 99-109 (QSPDIAQGVNE) is flexible loop. Residues 166 to 168 (DAK), 234 to 235 (RF), Asp243, 249 to 250 (RK), Ala266, and Lys270 each bind ATP. An L-methionine-binding site is contributed by Asp243. Residue Lys274 coordinates L-methionine.

The protein belongs to the AdoMet synthase family. In terms of assembly, homotetramer; dimer of dimers. It depends on Mg(2+) as a cofactor. Requires K(+) as cofactor.

It localises to the cytoplasm. The catalysed reaction is L-methionine + ATP + H2O = S-adenosyl-L-methionine + phosphate + diphosphate. It functions in the pathway amino-acid biosynthesis; S-adenosyl-L-methionine biosynthesis; S-adenosyl-L-methionine from L-methionine: step 1/1. Catalyzes the formation of S-adenosylmethionine (AdoMet) from methionine and ATP. The overall synthetic reaction is composed of two sequential steps, AdoMet formation and the subsequent tripolyphosphate hydrolysis which occurs prior to release of AdoMet from the enzyme. This Neisseria meningitidis serogroup B (strain ATCC BAA-335 / MC58) protein is S-adenosylmethionine synthase.